Here is a 283-residue protein sequence, read N- to C-terminus: Calpastatin (283 aa).

Positions 1–15 (MNPTETKAIPVSQQM) are enriched in polar residues. Disordered regions lie at residues 1 to 186 (MNPT…SDPM) and 212 to 283 (NEGI…KVEK). The span at 21-30 (PNKKKHKKQA) shows a compositional bias: basic residues. Residue lysine 32 forms a Glycyl lysine isopeptide (Lys-Gly) (interchain with G-Cter in SUMO2) linkage. Over residues 46 to 65 (VVHEKKSQEGKPKEHTEQKS) the composition is skewed to basic and acidic residues. Residue lysine 50 is modified to N6-acetyllysine. At serine 87 the chain carries Phosphoserine. Low complexity predominate over residues 107-122 (VSAGGESVAGVAATSG). Serine 133 is modified (phosphoserine). Threonine 135 bears the Phosphothreonine mark. Residues 170–222 (IEEENTTYTGPEVSDPMSSTYIEELGKREVTIPPKYRELLAKNEGITGPPADS) form an Inhibitory domain 1 repeat. A phosphoserine mark is found at serine 222 and serine 243. A compositionally biased stretch (basic and acidic residues) spans 249 to 258 (KKTEKEESTE).

It belongs to the protease inhibitor I27 (calpastatin) family.

Functionally, specific inhibition of calpain (calcium-dependent cysteine protease). Plays a key role in postmortem tenderization of meat and have been proposed to be involved in muscle protein degradation in living tissue. The polypeptide is Calpastatin (CAST) (Chlorocebus aethiops (Green monkey)).